The following is a 95-amino-acid chain: UPF0473 protein BPUM_2377 (95 aa).

It belongs to the UPF0473 family.

This is UPF0473 protein BPUM_2377 from Bacillus pumilus (strain SAFR-032).